Consider the following 235-residue polypeptide: MLRQRFVFDTTALTDSQAWESEGCTTLCEGMSAILHRVAQARLHLGISCYVPYPSVYNEIRDFVRNNNCDIAILGKIDTWLVKKTPDRYRVKIPSKIFYEYVDYMRSRINKGMNVSEEAIWEAVSRCLSISATGEGREQMREEIEREVVGSIIRKFREKYRAALRYGILDSAPDIDVLLLAKDLDAAVVSQDLGIQRWAEQLGLRFMEARAFPQMVREYMSFVPLHTEELEDRMV.

Belongs to the HARP family.

The catalysed reaction is Endonucleolytic cleavage of RNA, removing 5'-extranucleotides from tRNA precursor.. Functionally, RNA-free RNase P that catalyzes the removal of the 5'-leader sequence from pre-tRNA to produce the mature 5'-terminus. The protein is RNA-free ribonuclease P of Methanothrix thermoacetophila (strain DSM 6194 / JCM 14653 / NBRC 101360 / PT) (Methanosaeta thermophila).